The following is a 398-amino-acid chain: Cathepsin E (398 aa).

The signal sequence occupies residues 1 to 21 (MKPLFVLLLLLLLLDLAQAQG). A propeptide spans 22-58 (VLHRVPLRRHQSLRKKLRAQGQLSDFWRSHNLDMIEF) (activation peptide). The Peptidase A1 domain occupies 80–394 (YFGTVSIGSP…DRGNNQVGLA (315 aa)). A glycan (N-linked (GlcNAc...) asparagine) is linked at Asn-92. Asp-98 is an active-site residue. Intrachain disulfides connect Cys-111–Cys-116 and Cys-274–Cys-278. Asp-283 is a catalytic residue.

The protein belongs to the peptidase A1 family. Homodimer; disulfide-linked. Post-translationally, glycosylated. The nature of the carbohydrate chain varies between cell types. In brain microglia, the proenzyme contains a high mannose-type oligosaccharide, while the mature enzyme contains a complex-type oligosaccharide. In stomach and spleen, the mature enzyme contains a high mannose-type oligosaccharide. In erythrocyte membranes, the mature enzyme contains a complex-type oligosaccharide. As to expression, expressed abundantly in lymphocytes and macrophages of the thymus and spleen, and in the M cells of the intestine. In the brain, expression is limited to reactive microglial cells, the large pyrimidial neurons in the cerebral cortex, the CA1 and CA3 pyrimidial neurons of the hippocampus, the large neurons of the neostriatum, and the Purkinje neurons of the cerebellum.

Its subcellular location is the endosome. The catalysed reaction is Similar to cathepsin D, but slightly broader specificity.. May have a role in immune function. Probably involved in the processing of antigenic peptides during MHC class II-mediated antigen presentation. May play a role in activation-induced lymphocyte depletion in the thymus, and in neuronal degeneration and glial cell activation in the brain. This is Cathepsin E (Ctse) from Rattus norvegicus (Rat).